The following is a 180-amino-acid chain: Large ribosomal subunit protein uL6 (180 aa).

This sequence belongs to the universal ribosomal protein uL6 family. As to quaternary structure, part of the 50S ribosomal subunit.

This protein binds to the 23S rRNA, and is important in its secondary structure. It is located near the subunit interface in the base of the L7/L12 stalk, and near the tRNA binding site of the peptidyltransferase center. This is Large ribosomal subunit protein uL6 from Anaeromyxobacter dehalogenans (strain 2CP-1 / ATCC BAA-258).